Here is a 440-residue protein sequence, read N- to C-terminus: Ribulose bisphosphate carboxylase large chain (440 aa).

Lys4 carries the post-translational modification N6,N6,N6-trimethyllysine. The substrate site is built by Asn113 and Thr163. The Proton acceptor role is filled by Lys165. Substrate is bound at residue Lys167. Mg(2+)-binding residues include Lys191, Asp193, and Glu194. Lys191 carries the post-translational modification N6-carboxylysine. Catalysis depends on His284, which acts as the Proton acceptor. Positions 285, 317, and 369 each coordinate substrate.

The protein belongs to the RuBisCO large chain family. Type I subfamily. As to quaternary structure, heterohexadecamer of 8 large chains and 8 small chains; disulfide-linked. The disulfide link is formed within the large subunit homodimers. The cofactor is Mg(2+). The disulfide bond which can form in the large chain dimeric partners within the hexadecamer appears to be associated with oxidative stress and protein turnover.

The protein localises to the plastid. The protein resides in the chloroplast. The enzyme catalyses 2 (2R)-3-phosphoglycerate + 2 H(+) = D-ribulose 1,5-bisphosphate + CO2 + H2O. It catalyses the reaction D-ribulose 1,5-bisphosphate + O2 = 2-phosphoglycolate + (2R)-3-phosphoglycerate + 2 H(+). Functionally, ruBisCO catalyzes two reactions: the carboxylation of D-ribulose 1,5-bisphosphate, the primary event in carbon dioxide fixation, as well as the oxidative fragmentation of the pentose substrate in the photorespiration process. Both reactions occur simultaneously and in competition at the same active site. The sequence is that of Ribulose bisphosphate carboxylase large chain from Dicksonia antarctica (Australian tree fern).